A 153-amino-acid polypeptide reads, in one-letter code: Hydrogenase expression/formation protein HoxT (153 aa).

The protein belongs to the HupJ family.

The protein is Hydrogenase expression/formation protein HoxT (hoxT) of Azotobacter vinelandii.